The following is a 434-amino-acid chain: Tryptamine hydroxycinnamoyltransferase 2 (434 aa).

Catalysis depends on proton acceptor residues histidine 154 and aspartate 380.

This sequence belongs to the plant acyltransferase family.

Hydroxycinnamoyl transferase that catalyzes the transfer of an acyl from p-coumaryol-CoA to tryptamine, to produce coumaroyl tryptamine. Serotonin and tyramine serve as acyl acceptors in vitro. Can use caffeoyl-CoA, and to a lesser extent feruloyl-CoA, as acyl donors. This is Tryptamine hydroxycinnamoyltransferase 2 from Oryza sativa subsp. japonica (Rice).